The sequence spans 220 residues: Ribosomal RNA small subunit methyltransferase G (220 aa).

S-adenosyl-L-methionine contacts are provided by residues Gly82, Leu87, 105-107 (DST), 133-134 (VE), and Arg147.

It belongs to the methyltransferase superfamily. RNA methyltransferase RsmG family.

It is found in the cytoplasm. Its function is as follows. Specifically methylates the N7 position of a guanine in 16S rRNA. The polypeptide is Ribosomal RNA small subunit methyltransferase G (Chlorobium limicola (strain DSM 245 / NBRC 103803 / 6330)).